The chain runs to 973 residues: Valine--tRNA ligase (973 aa).

Positions 57-67 (PNVTGSLHMGH) match the 'HIGH' region motif. Residues 569-573 (KMSKS) carry the 'KMSKS' region motif. Position 572 (K572) interacts with ATP. A coiled-coil region spans residues 901 to 970 (MAGLIDKEAE…AKILEQKIQI (70 aa)).

The protein belongs to the class-I aminoacyl-tRNA synthetase family. ValS type 1 subfamily. As to quaternary structure, monomer.

The protein resides in the cytoplasm. It catalyses the reaction tRNA(Val) + L-valine + ATP = L-valyl-tRNA(Val) + AMP + diphosphate. In terms of biological role, catalyzes the attachment of valine to tRNA(Val). As ValRS can inadvertently accommodate and process structurally similar amino acids such as threonine, to avoid such errors, it has a 'posttransfer' editing activity that hydrolyzes mischarged Thr-tRNA(Val) in a tRNA-dependent manner. This is Valine--tRNA ligase from Colwellia psychrerythraea (strain 34H / ATCC BAA-681) (Vibrio psychroerythus).